The following is a 285-amino-acid chain: MPLDATTQLVTLLGHPVEHSLSPRIHNTAFRAQDVNAAYVATPVRPEALGDAVAGLRALQFLGANVTTPHKEAVLPVLDEVTERARAVGAVNTIVRDGGRLHGDNTDIAGFLRPLEERGGDALEGAPMLVFGAGGAARAVVYGLLSHYRPERLTIVARRPDQAEGLAADLAAHDPDGALRVSSFEEAALSVRTSRLVVNATPLGMAPDRRGQTPWPNPVDFTADHVVYDLVYTPEETRLLREAAAEGATPIGGLDMLVEQAAAAYRQWTDRGMPQAAVYDALRAD.

Shikimate-binding positions include 20 to 22 and Thr-67; that span reads SLS. Catalysis depends on Lys-71, which acts as the Proton acceptor. Residue Glu-83 participates in NADP(+) binding. Shikimate is bound by residues Asn-92 and Asp-107. NADP(+) is bound by residues 132-136 and Leu-230; that span reads GAGGA. A shikimate-binding site is contributed by Tyr-232. Residue Gly-253 participates in NADP(+) binding.

This sequence belongs to the shikimate dehydrogenase family. Homodimer.

It carries out the reaction shikimate + NADP(+) = 3-dehydroshikimate + NADPH + H(+). It participates in metabolic intermediate biosynthesis; chorismate biosynthesis; chorismate from D-erythrose 4-phosphate and phosphoenolpyruvate: step 4/7. Functionally, involved in the biosynthesis of the chorismate, which leads to the biosynthesis of aromatic amino acids. Catalyzes the reversible NADPH linked reduction of 3-dehydroshikimate (DHSA) to yield shikimate (SA). This chain is Shikimate dehydrogenase (NADP(+)), found in Salinibacter ruber (strain DSM 13855 / M31).